A 503-amino-acid chain; its full sequence is Glycerol kinase (503 aa).

Thr-12 lines the ADP pocket. ATP is bound by residues Thr-12, Thr-13, and Ser-14. Thr-12 is a sn-glycerol 3-phosphate binding site. Arg-16 lines the ADP pocket. The sn-glycerol 3-phosphate site is built by Arg-82, Glu-83, Tyr-134, and Asp-243. Residues Arg-82, Glu-83, Tyr-134, Asp-243, and Gln-244 each coordinate glycerol. ADP-binding residues include Thr-265 and Gly-308. ATP is bound by residues Thr-265, Gly-308, Gln-312, and Gly-412. Gly-412 lines the ADP pocket.

The protein belongs to the FGGY kinase family.

The catalysed reaction is glycerol + ATP = sn-glycerol 3-phosphate + ADP + H(+). The protein operates within polyol metabolism; glycerol degradation via glycerol kinase pathway; sn-glycerol 3-phosphate from glycerol: step 1/1. Inhibited by fructose 1,6-bisphosphate (FBP). Functionally, key enzyme in the regulation of glycerol uptake and metabolism. Catalyzes the phosphorylation of glycerol to yield sn-glycerol 3-phosphate. The protein is Glycerol kinase of Nitrobacter hamburgensis (strain DSM 10229 / NCIMB 13809 / X14).